The primary structure comprises 1457 residues: Eye-specific diacylglycerol kinase (1457 aa).

Disordered regions lie at residues 1–123 (MQQQ…SSEA), 136–177 (RSHS…PPCI), and 207–339 (YSNT…QPTT). Low complexity-rich tracts occupy residues 22 to 62 (SATT…LRTT), 98 to 115 (SQRA…SSAS), and 141 to 154 (DSAT…DSGT). The segment covering 214 to 253 (ASEDEDEVEGHNAEEEEEGSAAIEDAEEETTEAATEEADE) has biased composition (acidic residues). Positions 254-266 (DPRTEVESEHDHD) are enriched in basic and acidic residues. A compositionally biased stretch (basic residues) spans 294 to 303 (RLPRQMRRHT). 2 Phorbol-ester/DAG-type zinc fingers span residues 591 to 641 (HYWK…TLAC) and 661 to 724 (HHWV…GEEC). A disordered region spans residues 758–799 (NNAASGSGGGGAGGGAGGGGGKSKKQTQRRQKGKEEKKEPRA). Residues 763 to 778 (GSGGGGAGGGAGGGGG) are compositionally biased toward gly residues. Positions 779 to 789 (KSKKQTQRRQK) are enriched in basic residues. The DAGKc domain maps to 808–944 (PEVIPVIVFI…MDRWRVKVTP (137 aa)). Residues 1264–1302 (TPDQERSFAAFSQRQAQNERRQMDQAQGRGPGSTDEDLQ) form a disordered region. ANK repeat units lie at residues 1320–1349 (QTSD…SLQS), 1353–1382 (NGQT…RRLI), 1389–1418 (LGQT…HLDT), and 1422–1451 (GGNT…TQPV).

Belongs to the eukaryotic diacylglycerol kinase family. As to expression, expressed specifically in adult eye.

It localises to the membrane. The catalysed reaction is a 1,2-diacyl-sn-glycerol + ATP = a 1,2-diacyl-sn-glycero-3-phosphate + ADP + H(+). Required for the maintenance of phospholipid turnover within the photoreceptor. The chain is Eye-specific diacylglycerol kinase (rdgA) from Drosophila melanogaster (Fruit fly).